The sequence spans 149 residues: Putative pre-16S rRNA nuclease (149 aa).

Belongs to the YqgF nuclease family.

It is found in the cytoplasm. Functionally, could be a nuclease involved in processing of the 5'-end of pre-16S rRNA. In Pseudoalteromonas translucida (strain TAC 125), this protein is Putative pre-16S rRNA nuclease.